The sequence spans 1393 residues: MACSIVQFCYFQDLQAARDFLFPHLREEILSGALRRDPSKSTDWEDDGWGAWEENEPQEPEEEGNTCKTQKTSWLQDCVLSLSPTNDLMVIAREQKAVFLVPKWKYSDKGKEEMQFAVGWSGSLNVEEGECVTSALCIPLASQKRSSTGRPDWTCIVVGFTSGYVRFYTENGVLLLAQLLNEDPVLQLKCRTYEIPRHPGVTEQNEELSILYPAAIVTIDGFSLFQSLRACRNQVAKAAASGNENIQPPPLAYKKWGLQDIDTIIDHASVGIMTLSPFDQMKTASNIGGFNAAIKNSPPAMSQYITVGSNPFTGFFYALEGSTQPLLSHVALAVASKLTSALFNAASGWLGWKSKHEEEAVQKQKPKVEPATPLAVRFGLPDSRRHGESICLSPCNTLAAVTDDFGRVILLDVARGIAIRMWKGYRDAQIGWIQTVEDLHERVPEKADFSPFGNSQGPSRVAQFLVIYAPRRGILEVWSTQQGPRVGAFNVGKHCRLLYPGYKIMGLNNVTSQSWQPQTYQICLVDPVSGSVKTVNVPFHLALSDKKSERAKDMHLVKKLAALLKTKSPNLDLVETEIKELILDIKYPATKKQALESILASERLPFSCLRNITQTLMDTLKSQELESVDEGLLQFCANKLKLLQLYESVSQLNSLDFHLDTPFSDNDLALLLRLDEKELLKLQALLEKYKQENTRTNVRFSDDKDGVLPVKTFLEYLEYEKDVLNIKKISEEEYVALGSFFFWKCLHGESSTEDMCHTLESAGLSPQLLLSLLLSVWLSKEKDILDKPQSICCLHTMLSLLSKMKVAIDETWDSQSVSPWWQQMRTACIQSENNGAALLSAHVGHSVAAQISNNMTEKKFSQTVLGADSEALTDSWEALSLDTEYWKLLLKQLEDCLILQTLLHSKGNTQTSKVSSLQAEPLPRLSVKKLLEGGKGGIADSVAKWIFKQDFSPEVLKLANEERDAENPDEPKEGVNRSFLEVSEMEMDLGAIPDLLHLAYEQFPCSLELDVLHAHCCWEYVVQWNKDPEEARFFVRSIEHLKQIFNAHVQNGIALMMWNTFLVKRFSAATYLMDKVGKSPKDRLCRRDVGMSDTAMTSFLGSCLDLLQILMEADVSRDEIQVPVLDTEDAWLSVEGPISIVELALEQKHIHYPLVEHHSILCSILYAVMRFSLKTVKPLSLFDSKGKNAFFKDLTSIQLLPSGEMDPNFISVRQQFLLKVVSAAVQAQHSATKVKDPTEEATPTPFGKDQDWPALAVDLAHHLQVSEDVVRRHYVGELYNYGVDHLGEEAILQVHDKEVLASQLLVLTGQRLAHALLHTQTKEGMELLARLPPTLCTWLKAMDPQDLQNTEVPIATTAKLVNKVIELLPEKHGQYGLALHLIEAVEAISLPSL.

Positions 36 to 67 are disordered; sequence RDPSKSTDWEDDGWGAWEENEPQEPEEEGNTC. A Phosphoserine modification is found at serine 39. The segment covering 44 to 64 has biased composition (acidic residues); it reads WEDDGWGAWEENEPQEPEEEG. Serine 450 carries the post-translational modification Phosphoserine. Threonine 901 is modified (phosphothreonine). A phosphoserine mark is found at serine 916 and serine 978.

This sequence belongs to the Rab3-GAP regulatory subunit family. As to quaternary structure, the Rab3 GTPase-activating complex is a heterodimer composed of RAB3GAP1 and RAB3GAP2. The Rab3 GTPase-activating complex interacts with DMXL2. Interacts with LMAN1. In terms of tissue distribution, ubiquitous.

The protein localises to the cytoplasm. The protein resides in the endoplasmic reticulum. In terms of biological role, regulatory subunit of the Rab3 GTPase-activating (Rab3GAP) complex composed of RAB3GAP1 and RAB3GAP2, which has GTPase-activating protein (GAP) activity towards various Rab3 subfamily members (RAB3A, RAB3B, RAB3C and RAB3D), RAB5A and RAB43, and guanine nucleotide exchange factor (GEF) activity towards RAB18. As part of the Rab3GAP complex, acts as a GAP for Rab3 proteins by converting active RAB3-GTP to the inactive form RAB3-GDP. Rab3 proteins are involved in regulated exocytosis of neurotransmitters and hormones. The Rab3GAP complex acts as a GEF for RAB18 by promoting the conversion of inactive RAB18-GDP to the active form RAB18-GTP. Recruits and stabilizes RAB18 at the cis-Golgi membrane in human fibroblasts where RAB18 is most likely activated. Also involved in RAB18 recruitment at the endoplasmic reticulum (ER) membrane where it maintains proper ER structure. Required for normal eye and brain development. May participate in neurodevelopmental processes such as proliferation, migration and differentiation before synapse formation, and non-synaptic vesicular release of neurotransmitters. The protein is Rab3 GTPase-activating protein non-catalytic subunit of Homo sapiens (Human).